The primary structure comprises 370 residues: D-alanine--D-alanine ligase (370 aa).

Residues Lys142–Gln348 enclose the ATP-grasp domain. Gln172–Val227 is an ATP binding site. Residues Asp302, Glu315, and Asn317 each coordinate Mg(2+).

It belongs to the D-alanine--D-alanine ligase family. The cofactor is Mg(2+). It depends on Mn(2+) as a cofactor.

It localises to the cytoplasm. It catalyses the reaction 2 D-alanine + ATP = D-alanyl-D-alanine + ADP + phosphate + H(+). It functions in the pathway cell wall biogenesis; peptidoglycan biosynthesis. Cell wall formation. The polypeptide is D-alanine--D-alanine ligase (Lactiplantibacillus plantarum (strain ATCC BAA-793 / NCIMB 8826 / WCFS1) (Lactobacillus plantarum)).